The following is a 188-amino-acid chain: ATP-dependent protease subunit HslV (188 aa).

Threonine 8 is an active-site residue. Residues alanine 165, cysteine 168, and threonine 171 each coordinate Na(+).

It belongs to the peptidase T1B family. HslV subfamily. A double ring-shaped homohexamer of HslV is capped on each side by a ring-shaped HslU homohexamer. The assembly of the HslU/HslV complex is dependent on binding of ATP.

It is found in the cytoplasm. The catalysed reaction is ATP-dependent cleavage of peptide bonds with broad specificity.. Allosterically activated by HslU binding. Functionally, protease subunit of a proteasome-like degradation complex believed to be a general protein degrading machinery. The polypeptide is ATP-dependent protease subunit HslV (Neorickettsia sennetsu (strain ATCC VR-367 / Miyayama) (Ehrlichia sennetsu)).